The chain runs to 300 residues: Integrin-binding sialoprotein (300 aa).

The disordered stretch occupies residues 41–258 (RFPVQSSSDS…YEQTGAHEYD (218 aa)). S46, S51, S59, S60, S82, and S90 each carry phosphoserine. The segment covering 46 to 58 (SSSDSSEENGNGD) has biased composition (low complexity). A compositionally biased stretch (acidic residues) spans 59–92 (SSEEEEEEEENSNEEENNEENEDSDGNEDEDSEA). Polar residues predominate over residues 93–102 (ENITLSTTTL). The N-linked (GlcNAc...) asparagine glycan is linked to N94. Over residues 125–136 (KAGDIGKKSAKE) the composition is skewed to basic and acidic residues. Residues 137–160 (EESDEDEEEEEENEENEAEVDDNE) are compositionally biased toward acidic residues. A Phosphoserine modification is found at S139. 3 stretches are compositionally biased toward polar residues: residues 161-173 (QGTN…STEV), 193-202 (VTEAQGTTVA), and 229-243 (ISGT…TTTP). Residues N164 and N169 are each glycosylated (N-linked (GlcNAc...) asparagine). Position 266 is a phosphoserine (S266). The Integrin-binding motif motif lies at 272–274 (RGD). The residue at position 293 (S293) is a Phosphoserine. A sulfotyrosine mark is found at Y299 and Y300.

As to quaternary structure, monomer. Interacts with integrins; the interaction promotes cell adhesion.

Its subcellular location is the secreted. Functionally, binds tightly to hydroxyapatite. Appears to form an integral part of the mineralized matrix. Probably important to cell-matrix interaction. Promotes adhesion and migration of various cells via the alpha-V/beta-3 integrin receptor (ITGAV:ITGB3). This is Integrin-binding sialoprotein (IBSP) from Sus scrofa (Pig).